The following is a 554-amino-acid chain: Solute carrier family 22 member 1 (554 aa).

The Cytoplasmic portion of the chain corresponds to 1-24 (MPSVDDVLEQVGEFGWFQKQAFLN). A helical membrane pass occupies residues 25 to 45 (LCLTSVAFAPIYVGIVFLGFT). At 46-234 (PDHRCRSPGV…EFVGLGYRKT (189 aa)) the chain is on the extracellular side. Residue Asn71 is glycosylated (N-linked (GlcNAc...) asparagine). A helical membrane pass occupies residues 235–255 (VAILYQTAFSVGLVLLSGLAY). The Cytoplasmic segment spans residues 256–261 (AVPHWR). The chain crosses the membrane as a helical span at residues 262 to 282 (SLQLAVSLPIFLLLLCYWFVP). Residues 282–286 (PESPR) carry the Proline-rich sequence motif. The Extracellular portion of the chain corresponds to 283–347 (ESPRWLLSQK…FRTQNLRKYT (65 aa)). Ser333 is subject to Phosphoserine. The chain crosses the membrane as a helical span at residues 348–368 (FILMYLWFTSSVLYQGLIMHV). At 369 to 376 (GATGGSLY) the chain is on the cytoplasmic side. Residues 377-397 (LDFLYSALVEFPAAFVILLII) traverse the membrane as a helical segment. Residues 398 to 402 (DRFGR) lie on the Extracellular side of the membrane. Residues 403–423 (LYLLAGSNLLAGAACFFMIFI) form a helical membrane-spanning segment. Over 424 to 431 (SHDLHWLS) the chain is Cytoplasmic. Residues 432-452 (IVAACIGRMGITIVFQMVCLV) traverse the membrane as a helical segment. The Extracellular portion of the chain corresponds to 453–464 (SAELYPTFIRNL). A helical transmembrane segment spans residues 465–485 (GVMVCSSLCDLGGVVAPFLVF). Over 486 to 492 (RLTEVWR) the chain is Cytoplasmic. Residues 493 to 513 (GLPLVLFAALGLVAGGMSLLL) form a helical membrane-spanning segment. Residues 514–554 (PETKGVALPETIEEVERLGRKAKPRDNMIYLQVKMPEPAGL) are Extracellular-facing.

Belongs to the major facilitator (TC 2.A.1) superfamily. Organic cation transporter (TC 2.A.1.19) family. In terms of processing, phosphorylated.

The protein localises to the basolateral cell membrane. The protein resides in the apical cell membrane. It is found in the lateral cell membrane. It localises to the basal cell membrane. Its subcellular location is the cell membrane. The enzyme catalyses 1-methylnicotinamide(out) = 1-methylnicotinamide(in). It carries out the reaction dopamine(out) = dopamine(in). The catalysed reaction is serotonin(out) = serotonin(in). It catalyses the reaction (R)-adrenaline(out) = (R)-adrenaline(in). The enzyme catalyses (R)-noradrenaline(out) = (R)-noradrenaline(in). It carries out the reaction histamine(out) = histamine(in). The catalysed reaction is guanidine(out) = guanidine(in). It catalyses the reaction choline(out) = choline(in). The enzyme catalyses acetylcholine(in) = acetylcholine(out). It carries out the reaction thiamine(in) = thiamine(out). The catalysed reaction is spermidine(in) = spermidine(out). It catalyses the reaction agmatine(out) = agmatine(in). The enzyme catalyses putrescine(out) = putrescine(in). It carries out the reaction (R)-carnitine(in) = (R)-carnitine(out). The catalysed reaction is O-isobutanoyl-(R)-carnitine(in) = O-isobutanoyl-(R)-carnitine(out). It catalyses the reaction O-acetyl-(R)-carnitine(in) = O-acetyl-(R)-carnitine(out). The enzyme catalyses O-3-hydroxybutanoyl-(R)-carnitine(in) = O-3-hydroxybutanoyl-(R)-carnitine(out). It carries out the reaction O-propanoyl-(R)-carnitine(in) = O-propanoyl-(R)-carnitine(out). The catalysed reaction is O-butanoyl-(R)-carnitine(in) = O-butanoyl-(R)-carnitine(out). It catalyses the reaction O-2-methylbutanoyl-(R)-carnitine(in) = O-2-methylbutanoyl-(R)-carnitine(out). The enzyme catalyses O-3-methylbutanoyl-(R)-carnitine(in) = O-3-methylbutanoyl-(R)-carnitine(out). It carries out the reaction O-hexanoyl-(R)-carnitine(in) = O-hexanoyl-(R)-carnitine(out). The catalysed reaction is L-histidyl-L-proline diketopiperazine(in) = L-histidyl-L-proline diketopiperazine(out). It catalyses the reaction (R)-salsolinol(in) = (R)-salsolinol(out). The enzyme catalyses prostaglandin F2alpha(out) = prostaglandin F2alpha(in). It carries out the reaction prostaglandin E2(out) = prostaglandin E2(in). Its activity is regulated as follows. Phosphorylation of the transporter leads to changes in its substrate affinity, resulting in a regulation of the transport activity. In contrast with rat ortholog, ASP uptake is inhibited by protein kinase A (PKA) and C (PKC) activation. ASP uptake is also endogenously activated by calmodulin, the calmodulin-dependent kinase II and LCK tyrosine kinase. Inhibited by cGMP, most likely through a cGMP-binding protein that interacts with OCT1. Functionally, electrogenic voltage-dependent transporter that mediates the transport of a variety of organic cations such as endogenous bioactive amines, cationic drugs and xenobiotics. Functions as a pH- and Na(+)-independent, bidirectional transporter. Cation cellular uptake or release is driven by the electrochemical potential (i.e. membrane potential and concentration gradient) and substrate selectivity. Hydrophobicity is a major requirement for recognition in polyvalent substrates and inhibitors. Primarily expressed in the basolateral membrane of hepatocytes and proximal tubules and involved in the uptake and disposition of cationic compounds from the blood by hepatic and renal clearance. Most likely functions as an uptake carrier in enterocytes contributing to the intestinal elimination of organic cations from the systemic circulation. Transports endogenous monoamines such as N-1-methylnicotinamide (NMN), guanidine, neurotransmitters dopamine, serotonin, noradrenaline, adrenaline and histamine, and quaternary ammonium compound such as choline. Also transports natural polyamines such as spermidine, agmatine and putrescine at low affinity, but relatively high turnover. Involved in the hepatic and intestinal uptake of the vitamin B1/thiamine, hence regulating hepatic lipid and energy metabolism. Contributes to the influx and efflux of fatty acid carriers carnitines and acylcarnitines across the basolateral membrane of hepatocytes, from the liver to the systemic circulation and inversely and may be involved in regulating the systemic availability of hepatic acylcarnitines. Also capable of transporting non-amine endogenous compounds such as prostaglandin E2 (PGE2) and prostaglandin F2-alpha (PGF2-alpha). May contribute to the transport of cationic compounds in testes across the blood-testis-barrier. Also mediates the uptake of xenobiotics tributylmethylammonium (TBuMA), quinidine, N-methyl-quinine (NMQ), N-methyl-quinidine (NMQD) N-(4,4-azo-n-pentyl)-quinuclidine (APQ), azidoprocainamide methoiodide (AMP), N-(4,4-azo-n-pentyl)-21-deoxyajmalinium (APDA) and 4-(4-(dimethylamino)styryl)-N-methylpyridinium (ASP). The sequence is that of Solute carrier family 22 member 1 (SLC22A1) from Sus scrofa (Pig).